A 477-amino-acid chain; its full sequence is Ribulose bisphosphate carboxylase large chain (477 aa).

A propeptide spanning residues 1 to 2 (MS) is cleaved from the precursor. The residue at position 3 (P3) is an N-acetylproline. Position 14 is an N6,N6,N6-trimethyllysine (K14). Substrate contacts are provided by N123 and T173. The active-site Proton acceptor is the K175. K177 provides a ligand contact to substrate. Mg(2+) is bound by residues K201, D203, and E204. The residue at position 201 (K201) is an N6-carboxylysine. H294 functions as the Proton acceptor in the catalytic mechanism. Positions 295, 327, and 379 each coordinate substrate.

It belongs to the RuBisCO large chain family. Type I subfamily. In terms of assembly, heterohexadecamer of 8 large chains and 8 small chains; disulfide-linked. The disulfide link is formed within the large subunit homodimers. Mg(2+) is required as a cofactor. In terms of processing, the disulfide bond which can form in the large chain dimeric partners within the hexadecamer appears to be associated with oxidative stress and protein turnover.

It localises to the plastid. It is found in the chloroplast. It carries out the reaction 2 (2R)-3-phosphoglycerate + 2 H(+) = D-ribulose 1,5-bisphosphate + CO2 + H2O. It catalyses the reaction D-ribulose 1,5-bisphosphate + O2 = 2-phosphoglycolate + (2R)-3-phosphoglycerate + 2 H(+). Functionally, ruBisCO catalyzes two reactions: the carboxylation of D-ribulose 1,5-bisphosphate, the primary event in carbon dioxide fixation, as well as the oxidative fragmentation of the pentose substrate in the photorespiration process. Both reactions occur simultaneously and in competition at the same active site. This chain is Ribulose bisphosphate carboxylase large chain (rbcL), found in Solanum tuberosum (Potato).